Here is a 416-residue protein sequence, read N- to C-terminus: ORC1-type DNA replication protein 9 (416 aa).

Residues 79–83 (SGKSL), Tyr-226, and Arg-238 contribute to the ATP site.

Belongs to the CDC6/cdc18 family.

Functionally, involved in regulation of DNA replication. This is ORC1-type DNA replication protein 9 (cdc6i) from Haloarcula marismortui (strain ATCC 43049 / DSM 3752 / JCM 8966 / VKM B-1809) (Halobacterium marismortui).